Reading from the N-terminus, the 147-residue chain is Protein archease (147 aa).

Residues aspartate 17, aspartate 146, and isoleucine 147 each contribute to the Ca(2+) site.

Belongs to the archease family.

In terms of biological role, activates the tRNA-splicing ligase complex by facilitating the enzymatic turnover of catalytic subunit RtcB. Acts by promoting the guanylylation of RtcB, a key intermediate step in tRNA ligation. Can also alter the NTP specificity of RtcB such that ATP, dGTP or ITP is used efficiently. This is Protein archease from Pyrobaculum calidifontis (strain DSM 21063 / JCM 11548 / VA1).